The primary structure comprises 388 residues: Succinate--CoA ligase [ADP-forming] subunit beta (388 aa).

Residues 9 to 244 enclose the ATP-grasp domain; sequence KQLFARYGLP…PSQEDSREAH (236 aa). ATP contacts are provided by residues lysine 46, 53–55, glutamate 99, threonine 102, and glutamate 107; that span reads GRG. Residues asparagine 199 and aspartate 213 each coordinate Mg(2+). Substrate contacts are provided by residues asparagine 264 and 321–323; that span reads GIV.

The protein belongs to the succinate/malate CoA ligase beta subunit family. In terms of assembly, heterotetramer of two alpha and two beta subunits. The cofactor is Mg(2+).

It catalyses the reaction succinate + ATP + CoA = succinyl-CoA + ADP + phosphate. It carries out the reaction GTP + succinate + CoA = succinyl-CoA + GDP + phosphate. It participates in carbohydrate metabolism; tricarboxylic acid cycle; succinate from succinyl-CoA (ligase route): step 1/1. In terms of biological role, succinyl-CoA synthetase functions in the citric acid cycle (TCA), coupling the hydrolysis of succinyl-CoA to the synthesis of either ATP or GTP and thus represents the only step of substrate-level phosphorylation in the TCA. The beta subunit provides nucleotide specificity of the enzyme and binds the substrate succinate, while the binding sites for coenzyme A and phosphate are found in the alpha subunit. The protein is Succinate--CoA ligase [ADP-forming] subunit beta of Pectobacterium atrosepticum (strain SCRI 1043 / ATCC BAA-672) (Erwinia carotovora subsp. atroseptica).